The chain runs to 444 residues: 1,4-beta-D-glucan glucohydrolase (444 aa).

Glu164 acts as the Proton donor in catalysis. The active-site Nucleophile is Glu349.

It belongs to the glycosyl hydrolase 1 family. Monomer.

It catalyses the reaction Hydrolysis of (1-&gt;4)-linkages in (1-&gt;4)-beta-D-glucans, to remove successive glucose units.. The enzyme catalyses Hydrolysis of terminal, non-reducing beta-D-glucosyl residues with release of beta-D-glucose.. It functions in the pathway glycan metabolism; cellulose degradation. It participates in glycan metabolism; beta-D-glucan degradation. With respect to regulation, activated by glucose up to 200 mM when p-nitrophenyl-beta-glucoside is used as the substrate. This activation by end product concentrations may be due to a transglycosylation activity of the enzyme. Broad substrate specificity glycosidase. Releases glucose from soluble glucooligomers, with a preference for longer oligomers; acts more readily on cellotetraose than on cellobiose. Displays similar activities towards the disaccharides lactose and cellobiose. Is also able to hydrolyze various aryl-beta-glycosides in vitro. The polypeptide is 1,4-beta-D-glucan glucohydrolase (Thermotoga neapolitana (strain ATCC 49049 / DSM 4359 / NBRC 107923 / NS-E)).